We begin with the raw amino-acid sequence, 204 residues long: Lymphotoxin-alpha (204 aa).

The N-terminal stretch at 1–33 (MTPPGRLYLLRVRSAPVLLLLGLLLGLPPGAQG) is a signal peptide. The THD domain maps to 62–204 (PAAHLIGDPS…SSVFFGAFAL (143 aa)). Asn95 is a glycosylation site (N-linked (GlcNAc...) asparagine). An intrachain disulfide couples Cys119 to Cys155.

The protein belongs to the tumor necrosis factor family. In terms of assembly, homotrimer, and heterotrimer of either two LTB and one LTA subunits or (less prevalent) two LTA and one LTB subunits. Interacts with TNFRSF14.

It is found in the secreted. The protein resides in the membrane. Cytokine that in its homotrimeric form binds to TNFRSF1A/TNFR1, TNFRSF1B/TNFBR and TNFRSF14/HVEM. In its heterotrimeric form with LTB binds to TNFRSF3/LTBR. Lymphotoxin is produced by lymphocytes and is cytotoxic for a wide range of tumor cells in vitro and in vivo. This Canis lupus familiaris (Dog) protein is Lymphotoxin-alpha (LTA).